Here is a 260-residue protein sequence, read N- to C-terminus: Dehydrogenase/reductase SDR family member 4 (260 aa).

Residue 18 to 42 participates in NADP(+) binding; the sequence is IVTASTDGIGLAIARRLAQDGAHVV. K74 bears the N6-acetyllysine; alternate mark. K74 carries the post-translational modification N6-succinyllysine; alternate. Residue S151 coordinates substrate. Catalysis depends on Y164, which acts as the Proton acceptor. Residue K168 participates in NADP(+) binding. K198 is modified (N6-acetyllysine; alternate). Residue K198 is modified to N6-succinyllysine; alternate. The residue at position 202 (S202) is a Phosphoserine. At K209 the chain carries N6-succinyllysine. The Peroxisomal targeting signal signature appears at 258–260; the sequence is SRL.

This sequence belongs to the short-chain dehydrogenases/reductases (SDR) family. In terms of assembly, homotetramer. Detected in liver and kidney. Detected at lower levels in heart, lung, spleen, small intestine, testis, brain and stomach.

The protein localises to the peroxisome. It catalyses the reaction a secondary alcohol + NADP(+) = a ketone + NADPH + H(+). It carries out the reaction 3alpha-hydroxy-5beta-pregnan-20-one + NADP(+) = 5beta-pregnan-3,20-dione + NADPH + H(+). The catalysed reaction is 5beta-dihydrotestosterone + NADPH + H(+) = 5beta-androstane-3alpha,17beta-diol + NADP(+). The enzyme catalyses all-trans-retinol + NADP(+) = all-trans-retinal + NADPH + H(+). It catalyses the reaction isatin + NADPH + H(+) = 3-hydroxyindolin-2-one + NADP(+). Inhibited by flavonoids (kaempferol, quercetin, quercitrin, genistein), myristic acid, pyrazole, barbital, phenobarbital and CuSO4. Its function is as follows. NADPH-dependent oxidoreductase which catalyzes the reduction of a variety of compounds bearing carbonyl groups including ketosteroids, alpha-dicarbonyl compounds, aldehydes, aromatic ketones and quinones. Reduces all-trans-retinal and 9-cis retinal. Reduces 3-ketosteroids and benzil into 3alpha-hydroxysteroids and S-benzoin, respectively, in contrast to the stereoselectivity of primates DHRS4s which produce 3beta-hydroxysteroids and R-benzoin. In the reverse reaction, catalyze the NADP-dependent oxidation of 3alpha-hydroxysteroids and alcohol, but with much lower efficiency. Involved in the metabolism of 3alpha-hydroxysteroids, retinoid, isatin and xenobiotic carbonyl compounds. The polypeptide is Dehydrogenase/reductase SDR family member 4 (DHRS4) (Oryctolagus cuniculus (Rabbit)).